The chain runs to 505 residues: AMP phosphorylase (505 aa).

AMP contacts are provided by residues Gly170, 196-201 (SRAITS), and Thr205. Catalysis depends on Asp258, which acts as the Proton donor. The AMP site is built by Ser266 and Lys290.

This sequence belongs to the thymidine/pyrimidine-nucleoside phosphorylase family. Type 2 subfamily.

It catalyses the reaction AMP + phosphate = alpha-D-ribose 1,5-bisphosphate + adenine. The catalysed reaction is CMP + phosphate = cytosine + alpha-D-ribose 1,5-bisphosphate. The enzyme catalyses UMP + phosphate = alpha-D-ribose 1,5-bisphosphate + uracil. In terms of biological role, catalyzes the conversion of AMP and phosphate to adenine and ribose 1,5-bisphosphate (R15P). Exhibits phosphorylase activity toward CMP and UMP in addition to AMP. Functions in an archaeal AMP degradation pathway, together with R15P isomerase and RubisCO. The protein is AMP phosphorylase of Methanococcus vannielii (strain ATCC 35089 / DSM 1224 / JCM 13029 / OCM 148 / SB).